Here is a 686-residue protein sequence, read N- to C-terminus: Alpha-amylase 1 (686 aa).

The Nucleophile role is filled by E125. D216 (proton donor) is an active-site residue.

It belongs to the glycosyl hydrolase 57 family.

Its subcellular location is the cytoplasm. The catalysed reaction is Endohydrolysis of (1-&gt;4)-alpha-D-glucosidic linkages in polysaccharides containing three or more (1-&gt;4)-alpha-linked D-glucose units.. In terms of biological role, this amylase is a highly liquefying-type: oligomers appeared at the beginning of incubation, followed by a graded decrease in the amounts of maltotriose, maltose and glucose in prolonged incubation. The chain is Alpha-amylase 1 (amyA) from Dictyoglomus thermophilum (strain ATCC 35947 / DSM 3960 / H-6-12).